The sequence spans 51 residues: MSDFTLDFAEGDAADTVSPQITSKSLCTPGCITGWMMCNTVTKGCSFTIGK.

The propeptide occupies 1 to 20; sequence MSDFTLDFAEGDAADTVSPQ. Positions 23–27 form a cross-link, lanthionine (Ser-Cys); sequence SKSLC. Cross-links (beta-methyllanthionine (Thr-Cys)) lie at residues 28–31, 33–38, and 42–45; these read TPGC, TGWMMC, and TKGC.

Belongs to the type A lantibiotic family. Maturation of lantibiotics involves the enzymatic conversion of Thr, and Ser into dehydrated AA and the formation of thioether bonds with cysteine. This is followed by membrane translocation and cleavage of the modified precursor.

Its activity is regulated as follows. Antimicrobial activity depends on the dehydration degree and integrity of flavucin. In terms of biological role, lanthionine-containing peptide antibiotic (lantibiotic) active on certain Gram-positive bacteria. The bactericidal activity of lantibiotics is based on depolarization of energized bacterial cytoplasmic membranes, initiated by the formation of aqueous transmembrane pores. Flavucin has high antimicrobial activity against several pathogenic bacteria such as S.aureus, E.faecalis, E.faecium and L.monocytogenes. Is also active against the Gram-negative P.aeruginosa. The protein is Lantibiotic flavucin of Corynebacterium lipophiloflavum (strain ATCC 700352 / DSM 44291 / CCUG 37336 / JCM 10383 / DMMZ 1944).